Reading from the N-terminus, the 611-residue chain is Chaperone protein HtpG (611 aa).

Residues 1-326 form an a; substrate-binding region; sequence MSETLERHAF…TEDLPLNVSR (326 aa). The tract at residues 327 to 536 is b; that stretch reads EMLQATPVLA…SGGPDLQMQR (210 aa). The c stretch occupies residues 537 to 611; it reads LLRRAGRGFG…RVAAALAAQA (75 aa).

It belongs to the heat shock protein 90 family. Homodimer.

The protein localises to the cytoplasm. Molecular chaperone. Has ATPase activity. The polypeptide is Chaperone protein HtpG (Methylobacterium sp. (strain 4-46)).